The following is a 1108-amino-acid chain: DNA-directed RNA polymerase subunit beta (1108 aa).

Belongs to the RNA polymerase beta chain family. In plastids the minimal PEP RNA polymerase catalytic core is composed of four subunits: alpha, beta, beta', and beta''. When a (nuclear-encoded) sigma factor is associated with the core the holoenzyme is formed, which can initiate transcription.

The protein resides in the plastid. It is found in the chloroplast. It carries out the reaction RNA(n) + a ribonucleoside 5'-triphosphate = RNA(n+1) + diphosphate. In terms of biological role, DNA-dependent RNA polymerase catalyzes the transcription of DNA into RNA using the four ribonucleoside triphosphates as substrates. This chain is DNA-directed RNA polymerase subunit beta, found in Gnetum parvifolium (Small-leaved jointfir).